The chain runs to 293 residues: Phosphatidylserine decarboxylase proenzyme (293 aa).

Active-site charge relay system; for autoendoproteolytic cleavage activity residues include Asp-88, His-144, and Ser-247. Residue Ser-247 is the Schiff-base intermediate with substrate; via pyruvic acid; for decarboxylase activity of the active site. A Pyruvic acid (Ser); by autocatalysis modification is found at Ser-247.

It belongs to the phosphatidylserine decarboxylase family. PSD-B subfamily. Prokaryotic type I sub-subfamily. Heterodimer of a large membrane-associated beta subunit and a small pyruvoyl-containing alpha subunit. It depends on pyruvate as a cofactor. In terms of processing, is synthesized initially as an inactive proenzyme. Formation of the active enzyme involves a self-maturation process in which the active site pyruvoyl group is generated from an internal serine residue via an autocatalytic post-translational modification. Two non-identical subunits are generated from the proenzyme in this reaction, and the pyruvate is formed at the N-terminus of the alpha chain, which is derived from the carboxyl end of the proenzyme. The autoendoproteolytic cleavage occurs by a canonical serine protease mechanism, in which the side chain hydroxyl group of the serine supplies its oxygen atom to form the C-terminus of the beta chain, while the remainder of the serine residue undergoes an oxidative deamination to produce ammonia and the pyruvoyl prosthetic group on the alpha chain. During this reaction, the Ser that is part of the protease active site of the proenzyme becomes the pyruvoyl prosthetic group, which constitutes an essential element of the active site of the mature decarboxylase.

It is found in the cell membrane. It carries out the reaction a 1,2-diacyl-sn-glycero-3-phospho-L-serine + H(+) = a 1,2-diacyl-sn-glycero-3-phosphoethanolamine + CO2. The protein operates within phospholipid metabolism; phosphatidylethanolamine biosynthesis; phosphatidylethanolamine from CDP-diacylglycerol: step 2/2. Functionally, catalyzes the formation of phosphatidylethanolamine (PtdEtn) from phosphatidylserine (PtdSer). This chain is Phosphatidylserine decarboxylase proenzyme, found in Xylella fastidiosa (strain M12).